A 31-amino-acid polypeptide reads, in one-letter code: Cytolysin Oshem 2 (31 aa).

It is found in the secreted. It localises to the nematocyst. The protein localises to the target cell membrane. Functionally, cytolysin that shows weak hemolysis and weak myonecrosis. This Olindias sambaquiensis (Hydromedusa) protein is Cytolysin Oshem 2.